Consider the following 26-residue polypeptide: Cytochrome c oxidase subunit 2 (26 aa).

This sequence belongs to the cytochrome c oxidase subunit 2 family. Component of the cytochrome c oxidase (complex IV, CIV), a multisubunit enzyme composed of a catalytic core of 3 subunits and several supernumerary subunits. The complex exists as a monomer or a dimer and forms supercomplexes (SCs) in the inner mitochondrial membrane with ubiquinol-cytochrome c oxidoreductase (cytochrome b-c1 complex, complex III, CIII). Cu cation serves as cofactor.

Its subcellular location is the mitochondrion inner membrane. The catalysed reaction is 4 Fe(II)-[cytochrome c] + O2 + 8 H(+)(in) = 4 Fe(III)-[cytochrome c] + 2 H2O + 4 H(+)(out). In terms of biological role, component of the cytochrome c oxidase, the last enzyme in the mitochondrial electron transport chain which drives oxidative phosphorylation. The respiratory chain contains 3 multisubunit complexes succinate dehydrogenase (complex II, CII), ubiquinol-cytochrome c oxidoreductase (cytochrome b-c1 complex, complex III, CIII) and cytochrome c oxidase (complex IV, CIV), that cooperate to transfer electrons derived from NADH and succinate to molecular oxygen, creating an electrochemical gradient over the inner membrane that drives transmembrane transport and the ATP synthase. Cytochrome c oxidase is the component of the respiratory chain that catalyzes the reduction of oxygen to water. Electrons originating from reduced cytochrome c in the intermembrane space (IMS) are transferred via the dinuclear copper A center (CU(A)) of subunit 2 and heme A of subunit 1 to the active site in subunit 1, a binuclear center (BNC) formed by heme A3 and copper B (CU(B)). The BNC reduces molecular oxygen to 2 water molecules using 4 electrons from cytochrome c in the IMS and 4 protons from the mitochondrial matrix. This is Cytochrome c oxidase subunit 2 (COX2) from Solanum tuberosum (Potato).